The sequence spans 552 residues: Outer dynein arm protein 1 (552 aa).

A disordered region spans residues 1–27 (MPSADATRGGGSAGSMGKGTLGAGDTL). Residues 8–22 (RGGGSAGSMGKGTLG) are compositionally biased toward gly residues. 3 coiled-coil regions span residues 28-59 (GHKSVLDKQRAAIEKLRAQNEQLKTELLLENK), 120-260 (SAKE…QELL), and 331-395 (TLFN…YEKR). Disordered regions lie at residues 482 to 515 (NRIIIEPPSTTQEEEVEGLEPEPVEEDRPLTREH) and 528 to 552 (LETAIKVRPAGADATGGKRGSPTRR). The span at 493–506 (QEEEVEGLEPEPVE) shows a compositional bias: acidic residues.

This sequence belongs to the ODA1/DCC2 family. In terms of assembly, component of the outer dynein arm complex.

It is found in the cytoplasm. Its subcellular location is the cytoskeleton. The protein resides in the cilium axoneme. Component of the outer dynein arm complex required for assembly of the outer dynein arm-docking complex (ODA-DC) and the outer dynein arm onto the doublet microtubule. The polypeptide is Outer dynein arm protein 1 (ODA1) (Chlamydomonas reinhardtii (Chlamydomonas smithii)).